We begin with the raw amino-acid sequence, 563 residues long: Arginine--tRNA ligase (563 aa).

A 'HIGH' region motif is present at residues 121-131 (PNIAKPFSIGH).

Belongs to the class-I aminoacyl-tRNA synthetase family. As to quaternary structure, monomer.

The protein localises to the cytoplasm. It catalyses the reaction tRNA(Arg) + L-arginine + ATP = L-arginyl-tRNA(Arg) + AMP + diphosphate. The sequence is that of Arginine--tRNA ligase from Streptococcus pneumoniae (strain Taiwan19F-14).